The chain runs to 360 residues: Peptide chain release factor 1 (360 aa).

Gln235 is modified (N5-methylglutamine). The disordered stretch occupies residues 281–310 (AERQRQDAAQAESRRLQVGSGDRSQRIRTY).

It belongs to the prokaryotic/mitochondrial release factor family. Post-translationally, methylated by PrmC. Methylation increases the termination efficiency of RF1.

It localises to the cytoplasm. Its function is as follows. Peptide chain release factor 1 directs the termination of translation in response to the peptide chain termination codons UAG and UAA. The protein is Peptide chain release factor 1 of Stenotrophomonas maltophilia (strain K279a).